The sequence spans 484 residues: Fumarate hydratase class II (484 aa).

The disordered stretch occupies residues 1-22 (MPSILDLPIGTGATGKRKESDS). Residues 110-112 (SGT), 141-144 (HPND), 151-153 (SSN), and Thr-199 each bind substrate. The active-site Proton donor/acceptor is the His-200. Ser-330 is an active-site residue. Substrate contacts are provided by residues Ser-331 and 336-338 (KVN).

It belongs to the class-II fumarase/aspartase family. Fumarase subfamily. In terms of assembly, homotetramer.

The protein resides in the cytoplasm. The catalysed reaction is (S)-malate = fumarate + H2O. It functions in the pathway carbohydrate metabolism; tricarboxylic acid cycle; (S)-malate from fumarate: step 1/1. Functionally, involved in the TCA cycle. Catalyzes the stereospecific interconversion of fumarate to L-malate. The protein is Fumarate hydratase class II of Methanosarcina acetivorans (strain ATCC 35395 / DSM 2834 / JCM 12185 / C2A).